Reading from the N-terminus, the 482-residue chain is Histone deacetylase 1 (482 aa).

Residues 9-321 (RKVCYYYDGD…WTYETAVALD (313 aa)) form a histone deacetylase region. Gly-27 and Lys-31 together coordinate 1D-myo-inositol 1,4,5,6-tetrakisphosphate. The residue at position 74 (Lys-74) is an N6-acetyllysine; alternate. Residue Lys-74 forms a Glycyl lysine isopeptide (Lys-Gly) (interchain with G-Cter in SUMO2); alternate linkage. Residue His-141 is part of the active site. Zn(2+) contacts are provided by Asp-176 and His-178. Lys-220 is modified (N6-acetyllysine). S-nitrosocysteine is present on Cys-261. Asp-264 is a binding site for Zn(2+). Arg-270 is a binding site for 1D-myo-inositol 1,4,5,6-tetrakisphosphate. The residue at position 273 (Cys-273) is an S-nitrosocysteine. Residues 390-400 (PEESGDEDEED) are compositionally biased toward acidic residues. The segment at 390-482 (PEESGDEDEE…KGVKEEVKLA (93 aa)) is disordered. Phosphoserine is present on residues Ser-393, Ser-406, Ser-409, Ser-421, and Ser-423. Residues 401-416 (PDKRISICSSDKRIAC) are compositionally biased toward basic and acidic residues. Residues 417-427 (EEEFSDSDEEG) show a composition bias toward acidic residues. N6-methylated lysine; by EHMT2 is present on Lys-432. Residue Lys-438 forms a Glycyl lysine isopeptide (Lys-Gly) (interchain with G-Cter in SUMO2) linkage. The span at 443–482 (VKTEDEKEKDPEEKKEVTEEEKTKEEKQEAKGVKEEVKLA) shows a compositional bias: basic and acidic residues. A Glycyl lysine isopeptide (Lys-Gly) (interchain with G-Cter in SUMO2); alternate cross-link involves residue Lys-444. Lys-444 is covalently cross-linked (Glycyl lysine isopeptide (Lys-Gly) (interchain with G-Cter in SUMO); alternate). Glycyl lysine isopeptide (Lys-Gly) (interchain with G-Cter in SUMO2) cross-links involve residues Lys-456, Lys-457, and Lys-473. A Glycyl lysine isopeptide (Lys-Gly) (interchain with G-Cter in SUMO2); alternate cross-link involves residue Lys-476. A Glycyl lysine isopeptide (Lys-Gly) (interchain with G-Cter in SUMO); alternate cross-link involves residue Lys-476. Residue Lys-480 forms a Glycyl lysine isopeptide (Lys-Gly) (interchain with G-Cter in SUMO2) linkage.

It belongs to the histone deacetylase family. HD type 1 subfamily. In terms of assembly, part of the core histone deacetylase (HDAC) complex composed of HDAC1, HDAC2, RBBP4 and RBBP7, the core complex associates with SIN3, SAP18 and SAP30 to form the SIN3 HDAC complex. Component of the nucleosome remodeling and deacetylase (NuRD) repressor complex, composed of core proteins MTA1, MTA2, MTA3, RBBP4, RBBP7, HDAC1, HDAC2, MBD2, MBD3, and peripherally associated proteins CDK2AP1, CDK2AP2, GATAD2A, GATAD2B, CHD3, CHD4 and CHD5. The exact stoichiometry of the NuRD complex is unknown, and some subunits such as MBD2 and MBD3, GATAD2A and GATAD2B, and CHD3, CHD4 and CHD5 define mutually exclusive NuRD complexes. Component of a BHC histone deacetylase complex that contains HDAC1, HDAC2, HMG20B/BRAF35, KDM1A, RCOR1/CoREST and PHF21A/BHC80. The BHC complex may also contain ZMYM2, ZNF217, ZMYM3, GSE1 and GTF2I. Component of a mSin3A corepressor complex that contains SIN3A, SAP130, SUDS3/SAP45, ARID4B/SAP180, HDAC1 and HDAC2. Found in a trimeric complex with APBB1 and TSHZ3; the interaction between HDAC1 and APBB1 is mediated by TSHZ3. Forms a complex comprising APPL1, RUVBL2, APPL2, CTNNB1 and HDAC2. Component of a RCOR/GFI/KDM1A/HDAC complex. Part of a complex composed of TRIM28, HDAC1, HDAC2 and EHMT2. Part of a complex containing at least CDYL, MIER1, MIER2, HDAC1 and HDAC2. The large PER complex involved in the histone deacetylation is composed of at least HDAC1, PER2, SFPQ and SIN3A. Associates with the 9-1-1 complex; interacts with HUS1. Found in a complex with DNMT3A and HDAC7. Found in a complex with YY1, SIN3A and GON4L. Identified in a histone deacetylase complex that contains DNTTIP1, HDAC1 and MIDEAS; this complex assembles into a tetramer that contains four copies of each protein chain. Found in a complex composed of at least SINHCAF, SIN3A, HDAC1, SAP30, RBBP4, OGT and TET1. Component of the SIN3B complex, which includes SIN3B, HDAC1, PHF12 and MORF4L1. Interacts with GFI1; the interaction is direct. Interacts directly with GFI1B. Interacts with TSHZ3 (via N-terminus); the interaction is direct. Interacts with APEX1; the interaction is not dependent on the acetylated status of APEX1. Interacts with BANP. Interacts with BAZ2A/TIP5. Interacts with BCL6. Interacts with BCOR. Interacts with BHLHE40/DEC1. Interacts with BRCC3; this interaction is enhanced in the presence of PWWP2B. Interacts with BRMS1. Interacts with BRMS1L. Interacts with C10orf90/FATS (via its N-terminal); the interaction prevents binding of HDAC1 to CDKN1A/p21 and facilitates the acetylation and stabilization of CDKN1A/p21. Interacts with CBFA2T3. Interacts with CCAR2. Interacts with CDK2AP1. Interacts with CHD3. Interacts with CHD4. Interacts with CHFR. Interacts with CIART. Interacts with CDKN1A/p21. Interacts with CDK5 complexed to CDK5R1 (p25). Interacts with CRY1. Interacts with DAXX. Interacts with DDIT3/CHOP. Interacts with DDX5. Interacts with DHX36; this interaction occurs in a RNA-dependent manner. Interacts with DNMT1. Interacts with DNTTIP1. Interacts with E4F1. Interacts with EP300. Interacts with ERCC6. Interacts with GATAD2A. Interacts with HCFC1. Interacts with HDAC9. Interacts with HUS1. Interacts with INSM1. Interacts with KDM4A. Interacts with KDM5A; this interaction impairs histone deacetylation. Interacts with KDM5B. Interacts with KLF1. Interacts with MBD3L2. Interacts with MIER1. Interacts with NFE4. Interacts with NR4A2/NURR1. Interacts with NR1D2 (via C-terminus). Interacts with NRIP1. Interacts with NSD2. Interacts with PACS2. Interacts with PHB2. Interacts with PPHLN1. Interacts with PRDM6. Interacts with PRDM16. Interacts with PWWP2A in a MTA1-dependent manner. Interacts with PWWP2B. Interacts with RB1. Interacts with RERE. Interacts with SANBR (via the BTB domain). Interacts with SAMSN1. Interacts with SAP30L. Interacts with SETDB1. Interacts with SIN3A. Interacts with SMAD3. Interacts with SMAD4; positively regulated by ZBTB7A. Interacts with SMARCAD1. Interacts with SMARCA4/BRG1. Interacts with SMYD2. Interacts with SMYD4 (via MYND-type zinc finger). Interacts with SP1; the interaction deacetylates SP1 and regulates its transcriptional activity. Interacts with SP3; the interaction deacetylates SP3 and regulates its transcriptional activity. In vitro, C(18) ceramides increase this interaction and the subsequent SP3 deacetylation and SP3-mediated repression of the TERT promoter. Interacts with SPEN/MINT. Interacts with SPHK2. Interacts with SUV39H1. Interacts with TGIF. Interacts with TGIF2. Interacts with TRAF6. Interacts with TRIM28; the interaction recruits HDAC1 to E2F1 and inhibits its acetylation. Interacts with TSC22D3 isoform 1; this interaction affects HDAC1 activity on MYOG promoter and thus inhibits MYOD1 transcriptional activity. Interacts with UHRF1. Interacts with UHRF2. Interacts with ZBTB7A. Interacts with ZMYND8. Interacts with ZMYND15. Interacts with ZNF431. Interacts with ZNF516; this interaction is enhanced in the presence of PWWP2B. Interacts with ZNF541. Interacts with ZNF638. Interacts with ZNHIT1. Interacts with the non-histone region of MACROH2A1. Identified in a complex with HDAC2, KCTD19, DNTTIP1 and ZNF541. Interacts with MSX3. Interacts with VRK1. Zn(2+) serves as cofactor. Sumoylated on Lys-444 and Lys-476; which promotes enzymatic activity. Desumoylated by SENP1. In terms of processing, phosphorylation on Ser-421 and Ser-423 promotes enzymatic activity and interactions with NuRD and SIN3 complexes. Phosphorylated by CDK5. Post-translationally, ubiquitinated by CHFR and KCTD11, leading to its degradation by the proteasome.

It is found in the nucleus. The catalysed reaction is N(6)-acetyl-L-lysyl-[histone] + H2O = L-lysyl-[histone] + acetate. It catalyses the reaction N(6)-acetyl-L-lysyl-[protein] + H2O = L-lysyl-[protein] + acetate. It carries out the reaction N(6)-(2E)-butenoyl-L-lysyl-[protein] + H2O = (2E)-2-butenoate + L-lysyl-[protein]. The enzyme catalyses N(6)-[(S)-lactoyl]-L-lysyl-[protein] + H2O = (S)-lactate + L-lysyl-[protein]. Its activity is regulated as follows. Inositol tetraphosphate (1D-myo-inositol 1,4,5,6-tetrakisphosphate) may act as an intermolecular glue between HDAC1 and N-Cor repressor complex components. Its function is as follows. Histone deacetylase that catalyzes the deacetylation of lysine residues on the N-terminal part of the core histones (H2A, H2B, H3 and H4). Histone deacetylation gives a tag for epigenetic repression and plays an important role in transcriptional regulation, cell cycle progression and developmental events. Histone deacetylases act via the formation of large multiprotein complexes. Acts as a component of the histone deacetylase NuRD complex which participates in the remodeling of chromatin. As part of the SIN3B complex is recruited downstream of the constitutively active genes transcriptional start sites through interaction with histones and mitigates histone acetylation and RNA polymerase II progression within transcribed regions contributing to the regulation of transcription. Also functions as a deacetylase for non-histone targets, such as NR1D2, RELA, SP1, SP3, STAT3 and TSHZ3. Deacetylates SP proteins, SP1 and SP3, and regulates their function. Component of the BRG1-RB1-HDAC1 complex, which negatively regulates the CREST-mediated transcription in resting neurons. Upon calcium stimulation, HDAC1 is released from the complex and CREBBP is recruited, which facilitates transcriptional activation. Deacetylates TSHZ3 and regulates its transcriptional repressor activity. Deacetylates 'Lys-310' in RELA and thereby inhibits the transcriptional activity of NF-kappa-B. Deacetylates NR1D2 and abrogates the effect of KAT5-mediated relieving of NR1D2 transcription repression activity. Component of a RCOR/GFI/KDM1A/HDAC complex that suppresses, via histone deacetylase (HDAC) recruitment, a number of genes implicated in multilineage blood cell development. Involved in CIART-mediated transcriptional repression of the circadian transcriptional activator: CLOCK-BMAL1 heterodimer. Required for the transcriptional repression of circadian target genes, such as PER1, mediated by the large PER complex or CRY1 through histone deacetylation. In addition to protein deacetylase activity, also has protein-lysine deacylase activity: acts as a protein decrotonylase and delactylase by mediating decrotonylation ((2E)-butenoyl) and delactylation (lactoyl) of histones, respectively. In Bos taurus (Bovine), this protein is Histone deacetylase 1 (HDAC1).